We begin with the raw amino-acid sequence, 520 residues long: Ribonuclease Y (520 aa).

The chain crosses the membrane as a helical span at residues isoleucine 3–leucine 23. The KH domain maps to alanine 210–leucine 273. An HD domain is found at valine 336–alanine 429.

The protein belongs to the RNase Y family.

It localises to the cell membrane. Endoribonuclease that initiates mRNA decay. The polypeptide is Ribonuclease Y (Syntrophotalea carbinolica (strain DSM 2380 / NBRC 103641 / GraBd1) (Pelobacter carbinolicus)).